A 506-amino-acid chain; its full sequence is RNA-splicing ligase RtcB homolog (506 aa).

The Mn(2+) site is built by Asp-120, Cys-123, His-228, His-260, and His-354. 227–231 is a binding site for GMP; it reads NHYAE. GMP is bound by residues 354 to 355, 403 to 406, Ser-410, 429 to 432, and Lys-505; these read HN, GGTM, and HGAG. The active-site GMP-histidine intermediate is the His-429.

The protein belongs to the RtcB family. Catalytic component of the tRNA-splicing ligase complex. Mn(2+) is required as a cofactor.

It catalyses the reaction a 3'-end 3'-phospho-ribonucleotide-RNA + a 5'-end dephospho-ribonucleoside-RNA + GTP = a ribonucleotidyl-ribonucleotide-RNA + GMP + diphosphate. The catalysed reaction is a 3'-end 2',3'-cyclophospho-ribonucleotide-RNA + a 5'-end dephospho-ribonucleoside-RNA + GTP + H2O = a ribonucleotidyl-ribonucleotide-RNA + GMP + diphosphate + H(+). Functionally, catalytic subunit of the tRNA-splicing ligase complex that acts by directly joining spliced tRNA halves to mature-sized tRNAs by incorporating the precursor-derived splice junction phosphate into the mature tRNA as a canonical 3',5'-phosphodiester. May act as an RNA ligase with broad substrate specificity, and may function toward other RNAs. The polypeptide is RNA-splicing ligase RtcB homolog (Plasmodium falciparum (isolate 3D7)).